We begin with the raw amino-acid sequence, 375 residues long: Actin (375 aa).

It belongs to the actin family.

It localises to the cytoplasm. The protein localises to the cytoskeleton. The catalysed reaction is ATP + H2O = ADP + phosphate + H(+). Actins are highly conserved proteins that are involved in various types of cell motility and are ubiquitously expressed in all eukaryotic cells. In Sterkiella cavicola (Ciliate), this protein is Actin.